The following is a 529-amino-acid chain: CTP synthase (529 aa).

The segment at M1–L266 is amidoligase domain. S13 lines the CTP pocket. S13 is a UTP binding site. An ATP-binding site is contributed by S14 to T19. Y54 lines the L-glutamine pocket. Residue D71 participates in ATP binding. Mg(2+) is bound by residues D71 and E141. Residues D148–E150, K187–Q192, and K223 each bind CTP. UTP is bound by residues K187–Q192 and K223. One can recognise a Glutamine amidotransferase type-1 domain in the interval K291–A529. G354 serves as a coordination point for L-glutamine. C381 (nucleophile; for glutamine hydrolysis) is an active-site residue. Residues F382 to Q385, E405, and R462 contribute to the L-glutamine site. Active-site residues include H506 and E508.

This sequence belongs to the CTP synthase family. In terms of assembly, homotetramer.

It catalyses the reaction UTP + L-glutamine + ATP + H2O = CTP + L-glutamate + ADP + phosphate + 2 H(+). The enzyme catalyses L-glutamine + H2O = L-glutamate + NH4(+). The catalysed reaction is UTP + NH4(+) + ATP = CTP + ADP + phosphate + 2 H(+). The protein operates within pyrimidine metabolism; CTP biosynthesis via de novo pathway; CTP from UDP: step 2/2. With respect to regulation, allosterically activated by GTP, when glutamine is the substrate; GTP has no effect on the reaction when ammonia is the substrate. The allosteric effector GTP functions by stabilizing the protein conformation that binds the tetrahedral intermediate(s) formed during glutamine hydrolysis. Inhibited by the product CTP, via allosteric rather than competitive inhibition. Catalyzes the ATP-dependent amination of UTP to CTP with either L-glutamine or ammonia as the source of nitrogen. Regulates intracellular CTP levels through interactions with the four ribonucleotide triphosphates. The polypeptide is CTP synthase (Sulfolobus acidocaldarius (strain ATCC 33909 / DSM 639 / JCM 8929 / NBRC 15157 / NCIMB 11770)).